Consider the following 120-residue polypeptide: Fluoride-specific ion channel FluC (120 aa).

Transmembrane regions (helical) follow at residues 30 to 50 (FGTLAVNILGSLLMGILYGLL), 66 to 86 (VGFLGALTTFSTFSMDSLLLL), and 96 to 116 (LNIILNVMVCIFMAWLGLQLV). 2 residues coordinate Na(+): glycine 70 and threonine 73.

This sequence belongs to the fluoride channel Fluc/FEX (TC 1.A.43) family.

Its subcellular location is the cell inner membrane. It carries out the reaction fluoride(in) = fluoride(out). Na(+) is not transported, but it plays an essential structural role and its presence is essential for fluoride channel function. Its function is as follows. Fluoride-specific ion channel. Important for reducing fluoride concentration in the cell, thus reducing its toxicity. The chain is Fluoride-specific ion channel FluC from Pseudoalteromonas translucida (strain TAC 125).